The following is a 320-amino-acid chain: Non-structural protein 5 (320 aa).

The chain is Non-structural protein 5 (S9) from Lymantria dispar (Gypsy moth).